Here is a 101-residue protein sequence, read N- to C-terminus: Protein Tat (101 aa).

The interaction with human CREBBP stretch occupies residues 1–24 (MEPVDPNLEPWKHPGSQPRTACNN). A transactivation region spans residues 1–48 (MEPVDPNLEPWKHPGSQPRTACNNCYCKKCCFHCYACFTRKGLGISYG). Zn(2+)-binding residues include Cys22, Cys25, and Cys27. Positions 22 to 37 (CNNCYCKKCCFHCYAC) are cysteine-rich. Lys28 carries the post-translational modification N6-acetyllysine; by host PCAF. Positions 30, 33, 34, and 37 each coordinate Zn(2+). Residues 38–48 (FTRKGLGISYG) form a core region. The span at 48–57 (GRKKRRQRRR) shows a compositional bias: basic residues. The tract at residues 48–101 (GRKKRRQRRRAPQDSQTHQASLSKQPASQSRGDPTGPTESKKKVERETETDPFD) is disordered. The short motif at 49–57 (RKKRRQRRR) is the Nuclear localization signal, RNA-binding (TAR), and protein transduction element. The segment at 49 to 86 (RKKRRQRRRAPQDSQTHQASLSKQPASQSRGDPTGPTE) is interaction with the host capping enzyme RNGTT. N6-acetyllysine; by host EP300 and GCN5L2 is present on residues Lys50 and Lys51. 2 positions are modified to asymmetric dimethylarginine; by host PRMT6: Arg52 and Arg53. Polar residues predominate over residues 60-79 (QDSQTHQASLSKQPASQSRG). A Glycyl lysine isopeptide (Lys-Gly) (interchain with G-Cter in ubiquitin) cross-link involves residue Lys71. Residues 78–80 (RGD) carry the Cell attachment site motif. Residues 86–101 (ESKKKVERETETDPFD) show a composition bias toward basic and acidic residues.

The protein belongs to the lentiviruses Tat family. Interacts with host CCNT1. Associates with the P-TEFb complex composed at least of Tat, P-TEFb (CDK9 and CCNT1), TAR RNA, RNA Pol II. Recruits the HATs CREBBP, TAF1/TFIID, EP300, PCAF and GCN5L2. Interacts with host KAT5/Tip60; this interaction targets the latter to degradation. Interacts with the host deacetylase SIRT1. Interacts with host capping enzyme RNGTT; this interaction stimulates RNGTT. Binds to host KDR, and to the host integrins ITGAV/ITGB3 and ITGA5/ITGB1. Interacts with host KPNB1/importin beta-1 without previous binding to KPNA1/importin alpha-1. Interacts with EIF2AK2. Interacts with host nucleosome assembly protein NAP1L1; this interaction may be required for the transport of Tat within the nucleus, since the two proteins interact at the nuclear rim. Interacts with host C1QBP/SF2P32; this interaction involves lysine-acetylated Tat. Interacts with the host chemokine receptors CCR2, CCR3 and CXCR4. Interacts with host DPP4/CD26; this interaction may trigger an anti-proliferative effect. Interacts with host LDLR. Interacts with the host extracellular matrix metalloproteinase MMP1. Interacts with host PRMT6; this interaction mediates Tat's methylation. Interacts with, and is ubiquitinated by MDM2/Hdm2. Interacts with host PSMC3 and HTATIP2. Interacts with STAB1; this interaction may overcome SATB1-mediated repression of IL2 and IL2RA (interleukin) in T cells by binding to the same domain than HDAC1. Interacts (when acetylated) with human CDK13, thereby increasing HIV-1 mRNA splicing and promoting the production of the doubly spliced HIV-1 protein Nef. Interacts with host TBP; this interaction modulates the activity of transcriptional pre-initiation complex. Interacts with host RELA. Interacts with host PLSCR1; this interaction negatively regulates Tat transactivation activity by altering its subcellular distribution. Post-translationally, asymmetrical arginine methylation by host PRMT6 seems to diminish the transactivation capacity of Tat and affects the interaction with host CCNT1. In terms of processing, acetylation by EP300, CREBBP, GCN5L2/GCN5 and PCAF regulates the transactivation activity of Tat. EP300-mediated acetylation of Lys-50 promotes dissociation of Tat from the TAR RNA through the competitive binding to PCAF's bromodomain. In addition, the non-acetylated Tat's N-terminus can also interact with PCAF. PCAF-mediated acetylation of Lys-28 enhances Tat's binding to CCNT1. Lys-50 is deacetylated by SIRT1. Polyubiquitination by host MDM2 does not target Tat to degradation, but activates its transactivation function and fosters interaction with CCNT1 and TAR RNA. Post-translationally, phosphorylated by EIF2AK2 on serine and threonine residues adjacent to the basic region important for TAR RNA binding and function. Phosphorylation of Tat by EIF2AK2 is dependent on the prior activation of EIF2AK2 by dsRNA.

The protein localises to the host nucleus. Its subcellular location is the host nucleolus. It localises to the host cytoplasm. It is found in the secreted. Functionally, transcriptional activator that increases RNA Pol II processivity, thereby increasing the level of full-length viral transcripts. Recognizes a hairpin structure at the 5'-LTR of the nascent viral mRNAs referred to as the transactivation responsive RNA element (TAR) and recruits the cyclin T1-CDK9 complex (P-TEFb complex) that will in turn hyperphosphorylate the RNA polymerase II to allow efficient elongation. The CDK9 component of P-TEFb and other Tat-activated kinases hyperphosphorylate the C-terminus of RNA Pol II that becomes stabilized and much more processive. Other factors such as HTATSF1/Tat-SF1, SUPT5H/SPT5, and HTATIP2 are also important for Tat's function. Besides its effect on RNA Pol II processivity, Tat induces chromatin remodeling of proviral genes by recruiting the histone acetyltransferases (HATs) CREBBP, EP300 and PCAF to the chromatin. This also contributes to the increase in proviral transcription rate, especially when the provirus integrates in transcriptionally silent region of the host genome. To ensure maximal activation of the LTR, Tat mediates nuclear translocation of NF-kappa-B by interacting with host RELA. Through its interaction with host TBP, Tat may also modulate transcription initiation. Tat can reactivate a latently infected cell by penetrating in it and transactivating its LTR promoter. In the cytoplasm, Tat is thought to act as a translational activator of HIV-1 mRNAs. Extracellular circulating Tat can be endocytosed by surrounding uninfected cells via the binding to several surface receptors such as CD26, CXCR4, heparan sulfate proteoglycans (HSPG) or LDLR. Neurons are rarely infected, but they internalize Tat via their LDLR. Through its interaction with nuclear HATs, Tat is potentially able to control the acetylation-dependent cellular gene expression. Modulates the expression of many cellular genes involved in cell survival, proliferation or in coding for cytokines or cytokine receptors. Tat plays a role in T-cell and neurons apoptosis. Tat induced neurotoxicity and apoptosis probably contribute to neuroAIDS. Circulating Tat also acts as a chemokine-like and/or growth factor-like molecule that binds to specific receptors on the surface of the cells, affecting many cellular pathways. In the vascular system, Tat binds to ITGAV/ITGB3 and ITGA5/ITGB1 integrins dimers at the surface of endothelial cells and competes with bFGF for heparin-binding sites, leading to an excess of soluble bFGF. This chain is Protein Tat, found in Homo sapiens (Human).